The sequence spans 92 residues: Protein S100-B (92 aa).

S2 carries the N-acetylserine modification. EF-hand domains lie at 13–48 and 49–84; these read DVFH…LEEI and KEQE…VTTA. H16 contacts Zn(2+). 2 residues coordinate Ca(2+): S19 and E22. Residue H26 coordinates Zn(2+). Residues K27, E32, D62, D64, D66, E68, and E73 each contribute to the Ca(2+) site. Residues H86 and H91 each contribute to the Zn(2+) site.

This sequence belongs to the S-100 family. In terms of assembly, dimer of either two alpha chains, or two beta chains, or one alpha and one beta chain. The S100B dimer binds two molecules of STK38. Interacts with CACYBP in a calcium-dependent manner. Interacts with ATAD3A; this interaction probably occurs in the cytosol prior to ATAD3A mitochondrial targeting. Interacts with S100A6. The S100B dimer interacts with two molecules of CAPZA1. Interacts with AGER. Interacts with PPP5C (via TPR repeats); the interaction is calcium-dependent and modulates PPP5C activity. Interacts with TPPP; this interaction inhibits TPPP dimerization. Interacts with isoform CLSTN3beta of CLSTN3; interaction promotes secretion. In terms of tissue distribution, although predominant among the water-soluble brain proteins, S100 is also found in a variety of other tissues.

It is found in the cytoplasm. It localises to the nucleus. Its subcellular location is the secreted. In terms of biological role, small zinc- and- and calcium-binding protein that is highly expressed in astrocytes and constitutes one of the most abundant soluble proteins in brain. Weakly binds calcium but binds zinc very tightly-distinct binding sites with different affinities exist for both ions on each monomer. Physiological concentrations of potassium ion antagonize the binding of both divalent cations, especially affecting high-affinity calcium-binding sites. Acts as a neurotrophic factor that promotes astrocytosis and axonal proliferation. Involved in innervation of thermogenic adipose tissue by acting as an adipocyte-derived neurotrophic factor that promotes sympathetic innervation of adipose tissue. Binds to and initiates the activation of STK38 by releasing autoinhibitory intramolecular interactions within the kinase. Interaction with AGER after myocardial infarction may play a role in myocyte apoptosis by activating ERK1/2 and p53/TP53 signaling. Could assist ATAD3A cytoplasmic processing, preventing aggregation and favoring mitochondrial localization. May mediate calcium-dependent regulation on many physiological processes by interacting with other proteins, such as TPR-containing proteins, and modulating their activity. The polypeptide is Protein S100-B (Rattus norvegicus (Rat)).